A 658-amino-acid polypeptide reads, in one-letter code: Threonine--tRNA ligase (658 aa).

Positions M1–Q61 constitute a TGS domain. The tract at residues D259–P554 is catalytic. Residues C353, H404, and H531 each coordinate Zn(2+).

It belongs to the class-II aminoacyl-tRNA synthetase family. As to quaternary structure, homodimer. The cofactor is Zn(2+).

The protein resides in the cytoplasm. The enzyme catalyses tRNA(Thr) + L-threonine + ATP = L-threonyl-tRNA(Thr) + AMP + diphosphate + H(+). Its function is as follows. Catalyzes the attachment of threonine to tRNA(Thr) in a two-step reaction: L-threonine is first activated by ATP to form Thr-AMP and then transferred to the acceptor end of tRNA(Thr). Also edits incorrectly charged L-seryl-tRNA(Thr). This Streptomyces avermitilis (strain ATCC 31267 / DSM 46492 / JCM 5070 / NBRC 14893 / NCIMB 12804 / NRRL 8165 / MA-4680) protein is Threonine--tRNA ligase.